The chain runs to 598 residues: Acetylcholine receptor subunit alpha-type acr-5 (598 aa).

The N-terminal stretch at 1 to 16 is a signal peptide; the sequence is MLPNIILILLIRYCSC. Over 17 to 323 the chain is Extracellular; that stretch reads GAGSRVYEKY…HLVIRRKPLY (307 aa). 6 N-linked (GlcNAc...) asparagine glycosylation sites follow: Asn54, Asn71, Asn77, Asn134, Asn178, and Asn252. Residues 324 to 344 form a helical membrane-spanning segment; the sequence is YMINLVVPTSIITIVAVTGFF. Over 345–356 the chain is Cytoplasmic; the sequence is TPTSSSSERDEK. The chain crosses the membrane as a helical span at residues 357–377; it reads LYLGINTLLTMSVMMLMVCNQ. Residues 378–391 lie on the Extracellular side of the membrane; sequence MPSTSTYVPLMSWY. Residues 392 to 412 traverse the membrane as a helical segment; it reads YIGIIMVIVVGTFLATGVLAI. At 413-563 the chain is on the cytoplasmic side; it reads HGQKHYNKPI…WEFLANVLDR (151 aa). The chain crosses the membrane as a helical span at residues 564–584; the sequence is ILLTIFCGFTFAVFIILIGFD. The Extracellular portion of the chain corresponds to 585 to 598; sequence SFFTFHTDSPPKTM.

It belongs to the ligand-gated ion channel (TC 1.A.9) family. Acetylcholine receptor (TC 1.A.9.1) subfamily.

The protein localises to the postsynaptic cell membrane. The protein resides in the cell membrane. Subunit of nicotinic acetylcholine receptor (nAChR). Involved in nAChR sensitivity to nicotine. Modulates locomotion towards the drug nicotine. The polypeptide is Acetylcholine receptor subunit alpha-type acr-5 (Caenorhabditis elegans).